Reading from the N-terminus, the 380-residue chain is Flap endonuclease 1 (380 aa).

The tract at residues 1 to 104 (MGIQGLAKLI…GELAKRSERR (104 aa)) is N-domain. R19 is modified (symmetric dimethylarginine; by PRMT5). A Mg(2+)-binding site is contributed by D34. Residues R47 and R70 each contribute to the DNA site. An N6-acetyllysine modification is found at K80. D86 provides a ligand contact to Mg(2+). R100 and R104 each carry symmetric dimethylarginine; by PRMT5. The segment at 122 to 253 (EVEKFTKRLV…KRAVDLIQKH (132 aa)) is I-domain. Mg(2+)-binding residues include E158, E160, D179, and D181. E158 is a binding site for DNA. S187 is subject to Phosphoserine; by CDK2. Symmetric dimethylarginine; by PRMT5 is present on R192. S197 is modified (phosphoserine). DNA contacts are provided by G231 and D233. D233 is a binding site for Mg(2+). 3 positions are modified to phosphoserine: S255, S293, and S335. T336 bears the Phosphothreonine mark. Residues 336–344 (TQGRLDDFF) are interaction with PCNA. The segment at 349-380 (SLSSAKRKEPEPKGAAKKKQRLGPAGKFKRGK) is disordered. K354, K375, K377, and K380 each carry N6-acetyllysine. Residues 363 to 380 (AAKKKQRLGPAGKFKRGK) show a composition bias toward basic residues.

The protein belongs to the XPG/RAD2 endonuclease family. FEN1 subfamily. As to quaternary structure, interacts with PCNA. Three molecules of FEN1 bind to one PCNA trimer with each molecule binding to one PCNA monomer. PCNA stimulates the nuclease activity without altering cleavage specificity. The C-terminal domain binds EP300; can bind simultaneously to both PCNA and EP300. Interacts with DDX11; this interaction is direct and increases flap endonuclease activity of FEN1. Interacts with WDR4; regulating its endonuclease activity. Interacts with POLB. The cofactor is Mg(2+). Post-translationally, acetylated by EP300. Acetylation inhibits both endonuclease and exonuclease activity. Acetylation also reduces DNA-binding activity but does not affect interaction with PCNA or EP300. In terms of processing, phosphorylation upon DNA damage induces relocalization to the nuclear plasma. Phosphorylation at Ser-187 by CDK2 occurs during late S-phase and results in dissociation from PCNA. Methylation at Arg-192 by PRMT5 impedes Ser-187 phosphorylation and increases interaction with PCNA.

The protein localises to the nucleus. It is found in the nucleolus. Its subcellular location is the nucleoplasm. It localises to the mitochondrion. Structure-specific nuclease with 5'-flap endonuclease and 5'-3' exonuclease activities involved in DNA replication and repair. During DNA replication, cleaves the 5'-overhanging flap structure that is generated by displacement synthesis when DNA polymerase encounters the 5'-end of a downstream Okazaki fragment. It enters the flap from the 5'-end and then tracks to cleave the flap base, leaving a nick for ligation. Also involved in the long patch base excision repair (LP-BER) pathway, by cleaving within the apurinic/apyrimidinic (AP) site-terminated flap. Acts as a genome stabilization factor that prevents flaps from equilibrating into structures that lead to duplications and deletions. Also possesses 5'-3' exonuclease activity on nicked or gapped double-stranded DNA, and exhibits RNase H activity. Also involved in replication and repair of rDNA and in repairing mitochondrial DNA. This chain is Flap endonuclease 1, found in Ovis aries (Sheep).